The chain runs to 285 residues: tRNA (adenine(58)-N(1))-methyltransferase catalytic subunit TRMT61A (285 aa).

S2 bears the N-acetylserine mark. 5 substrate regions span residues 20–22 (LGH), 35–42 (QTQTRHGV), 64–65 (GW), 85–89 (QILYS), and 110–117 (SGTGSGSV). S-adenosyl-L-methionine is bound by residues L87, 114–116 (SGS), E135, R140, 163–164 (DV), and D181. 2 substrate regions span residues 180–183 (LDIP) and 205–212 (SFSPCIEQ). T274 lines the substrate pocket.

Belongs to the class I-like SAM-binding methyltransferase superfamily. TRM61 family. As to quaternary structure, heterotetramer; composed of two copies of TRMT6 and two copies of TRMT61A.

It localises to the nucleus. The enzyme catalyses adenosine(58) in tRNA + S-adenosyl-L-methionine = N(1)-methyladenosine(58) in tRNA + S-adenosyl-L-homocysteine + H(+). It carries out the reaction an adenosine in mRNA + S-adenosyl-L-methionine = an N(1)-methyladenosine in mRNA + S-adenosyl-L-homocysteine + H(+). In terms of biological role, catalytic subunit of tRNA (adenine-N(1)-)-methyltransferase, which catalyzes the formation of N(1)-methyladenine at position 58 (m1A58) in initiator methionyl-tRNA. Catalytic subunit of mRNA N(1)-methyltransferase complex, which mediates methylation of adenosine residues at the N(1) position of a small subset of mRNAs: N(1) methylation takes place in tRNA T-loop-like structures of mRNAs and is only present at low stoichiometries. The sequence is that of tRNA (adenine(58)-N(1))-methyltransferase catalytic subunit TRMT61A (TRMT61A) from Bos taurus (Bovine).